A 427-amino-acid polypeptide reads, in one-letter code: Enolase 2 (427 aa).

Position 165 (Gln165) interacts with (2R)-2-phosphoglycerate. Residue Glu207 is the Proton donor of the active site. The Mg(2+) site is built by Asp244, Glu287, and Asp314. (2R)-2-phosphoglycerate contacts are provided by Lys339, Arg368, Ser369, and Lys390. The Proton acceptor role is filled by Lys339.

This sequence belongs to the enolase family. Component of the RNA degradosome, a multiprotein complex involved in RNA processing and mRNA degradation. Mg(2+) is required as a cofactor.

The protein resides in the cytoplasm. It localises to the secreted. Its subcellular location is the cell surface. It carries out the reaction (2R)-2-phosphoglycerate = phosphoenolpyruvate + H2O. The protein operates within carbohydrate degradation; glycolysis; pyruvate from D-glyceraldehyde 3-phosphate: step 4/5. Catalyzes the reversible conversion of 2-phosphoglycerate (2-PG) into phosphoenolpyruvate (PEP). It is essential for the degradation of carbohydrates via glycolysis. In Pseudomonas syringae pv. tomato (strain ATCC BAA-871 / DC3000), this protein is Enolase 2.